Here is a 347-residue protein sequence, read N- to C-terminus: NADH-ubiquinone oxidoreductase chain 2 (347 aa).

The next 11 helical transmembrane spans lie at 5–22 (ILIT…IVLF), 26–45 (WFMI…PILM), 60–80 (FLTQ…NLLC), 96–116 (TMIT…FWVP), 122–142 (ISLS…LSIL), 153–173 (LLLM…LNQT), 178–198 (ILAY…VYNP), 200–220 (LAIL…MLFM), 237–257 (FPLM…LPPL), 274–294 (DMII…YFYT), and 325–345 (LLAP…MLAA).

The protein belongs to the complex I subunit 2 family. Core subunit of respiratory chain NADH dehydrogenase (Complex I) which is composed of 45 different subunits. Interacts with TMEM242.

The protein localises to the mitochondrion inner membrane. The catalysed reaction is a ubiquinone + NADH + 5 H(+)(in) = a ubiquinol + NAD(+) + 4 H(+)(out). Core subunit of the mitochondrial membrane respiratory chain NADH dehydrogenase (Complex I) which catalyzes electron transfer from NADH through the respiratory chain, using ubiquinone as an electron acceptor. Essential for the catalytic activity and assembly of complex I. This is NADH-ubiquinone oxidoreductase chain 2 from Ailuropoda melanoleuca (Giant panda).